The following is a 293-amino-acid chain: MEPGLCSRAYLLVGGLWTAISKALFAEFLATGLYVFFGVGSVLPWPVALPSVLQIAITFNLATATAVQISWKTSGAHANPAVTLAYLVGSHISLPRAMAYIAAQLAGATAGAALLYGVTPGGIRETLGVNVVHNSTSTGQAVAVELVLTLQLVLCVFASMDGRQTLASPAAMIGTSVALGHLIGIYFTGCSMNPARSFGPAVIVGKFAVHWIFWVGPLTGAVLASLIYNFILFPDTKTVAQRLAILVGTTKVEKVVDLEPQKKESQTNSEDTECLTSPCEEAVRSFSFTLGLC.

The Cytoplasmic segment spans residues 1 to 22; it reads MEPGLCSRAYLLVGGLWTAISK. A helical transmembrane segment spans residues 23-43; the sequence is ALFAEFLATGLYVFFGVGSVL. Residues 44–51 lie on the Extracellular side of the membrane; the sequence is PWPVALPS. The chain crosses the membrane as a helical span at residues 52–70; it reads VLQIAITFNLATATAVQIS. Residues 71-75 lie on the Cytoplasmic side of the membrane; that stretch reads WKTSG. The segment at residues 76–85 is an intramembrane region (discontinuously helical); it reads AHANPAVTLA. The NPA 1 motif lies at 79–81; that stretch reads NPA. The Cytoplasmic segment spans residues 86-96; sequence YLVGSHISLPR. Residues 97–118 form a helical membrane-spanning segment; the sequence is AMAYIAAQLAGATAGAALLYGV. The Extracellular portion of the chain corresponds to 119 to 138; it reads TPGGIRETLGVNVVHNSTST. Asparagine 134 carries an N-linked (GlcNAc...) asparagine glycan. Residues 139–159 traverse the membrane as a helical segment; it reads GQAVAVELVLTLQLVLCVFAS. The Cytoplasmic portion of the chain corresponds to 160–165; that stretch reads MDGRQT. Residues 166–185 traverse the membrane as a helical segment; it reads LASPAAMIGTSVALGHLIGI. The Extracellular portion of the chain corresponds to 186–189; the sequence is YFTG. Positions 190–202 form an intramembrane region, discontinuously helical; it reads CSMNPARSFGPAV. An NPA 2 motif is present at residues 193-195; sequence NPA. The Extracellular portion of the chain corresponds to 203–210; the sequence is IVGKFAVH. Residues 211–231 form a helical membrane-spanning segment; that stretch reads WIFWVGPLTGAVLASLIYNFI. Over 232–293 the chain is Cytoplasmic; that stretch reads LFPDTKTVAQ…RSFSFTLGLC (62 aa).

The protein belongs to the MIP/aquaporin (TC 1.A.8) family. Homotetramer; each monomer provides an independent solute pore.

It is found in the cytoplasmic vesicle membrane. The catalysed reaction is nitrate(in) = nitrate(out). It carries out the reaction iodide(out) = iodide(in). It catalyses the reaction bromide(in) = bromide(out). The enzyme catalyses chloride(in) = chloride(out). The catalysed reaction is Na(+)(in) = Na(+)(out). It carries out the reaction H2O(in) = H2O(out). It catalyses the reaction CO2(out) = CO2(in). The enzyme catalyses NH4(+)(in) = NH4(+)(out). In terms of biological role, aquaporins form homotetrameric transmembrane channels, with each monomer independently mediating water transport across the plasma membrane along its osmotic gradient. Unlike classical aquaporins, AQP6 is an intracellular channel with selective anion permeability, particularly for nitrate, and exhibits very low water permeability. It may also facilitate the transport of gases, such as CO2 and NH4(+), as demonstrated in vitro. This chain is Aquaporin-6, found in Mus musculus (Mouse).